The chain runs to 227 residues: Uracil-DNA glycosylase (227 aa).

The Proton acceptor role is filled by D68.

This sequence belongs to the uracil-DNA glycosylase (UDG) superfamily. UNG family.

It localises to the cytoplasm. It carries out the reaction Hydrolyzes single-stranded DNA or mismatched double-stranded DNA and polynucleotides, releasing free uracil.. Excises uracil residues from the DNA which can arise as a result of misincorporation of dUMP residues by DNA polymerase or due to deamination of cytosine. This Mycobacterium sp. (strain JLS) protein is Uracil-DNA glycosylase.